The following is a 445-amino-acid chain: Sterile alpha motif domain-containing protein 7 (445 aa).

Residues 98-172 form a required for localization to nuclear polycomb bodies region; that stretch reads HAARAEMEMY…HLQGNPILLA (75 aa). Residues 193–282 are disordered; it reads YQKPPESDTE…WDDGKGKPSE (90 aa). A compositionally biased stretch (basic and acidic residues) spans 227 to 244; sequence IKDPDIEVDNQQKPRVAD. The SAM domain maps to 324 to 378; sequence WTVDDVYNFIRSLPGCSDYAQVFKDHAIDGETLPLLTEQHLRGTMGLKLGPALKI. The interval 425–445 is disordered; sequence SIPGPQDLLSPKRTEQDVMRN. Residues 434–445 show a composition bias toward basic and acidic residues; the sequence is SPKRTEQDVMRN.

Monomer, homodimer and homooligomer. Component of a Polycomb group (PcG) multiprotein PRC1-like complex. Interacts with PHC2 and NR2E3. Interacts with RNF1 in a PHC2-dependent manner. Interacts with SAMD11. Expressed in the retina and the pineal gland. In the retina, it is predominantly expressed in the outer nuclear layer and developing rod photoreceptors.

The protein localises to the nucleus. The protein resides in the cytoplasm. In terms of biological role, component of a Polycomb group (PcG) multiprotein PRC1-like complex, essential for establishing rod photoreceptor cell identity and function by silencing nonrod gene expression in developing rod photoreceptor cells. Via its association with the PRC1-like complex, promotes epigenetic repressive marks H3K27me3 and H2AK119ub marks in nonrod genes, silencing their transcription. Represses Crx-controlled photoreceptor-specific gene expression. The sequence is that of Sterile alpha motif domain-containing protein 7 (Samd7) from Mus musculus (Mouse).